The primary structure comprises 825 residues: NT-3 growth factor receptor (825 aa).

The first 31 residues, 1–31 (MDVSLCPAKCSFWRIFLLGSVWLDYVGSVLA), serve as a signal peptide directing secretion. 2 cysteine pairs are disulfide-bonded: cysteine 32–cysteine 38 and cysteine 36–cysteine 45. The Extracellular portion of the chain corresponds to 32–429 (CPANCVCSKT…TVTHKPEEDT (398 aa)). 3 N-linked (GlcNAc...) asparagine glycosylation sites follow: asparagine 68, asparagine 72, and asparagine 79. LRR repeat units follow at residues 104–125 (GLQK…AFAK) and 128–149 (HLRY…LFQT). 2 N-linked (GlcNAc...) asparagine glycosylation sites follow: asparagine 133 and asparagine 163. One can recognise an LRRCT domain in the interval 160–209 (NFFNCSCDIRWMQLWQEQGEARLDSQSLYCISADGSQLPLFRMNISQCDL). Intrachain disulfides connect cysteine 164–cysteine 189 and cysteine 166–cysteine 207. 7 N-linked (GlcNAc...) asparagine glycosylation sites follow: asparagine 203, asparagine 218, asparagine 232, asparagine 259, asparagine 267, asparagine 272, and asparagine 294. 2 Ig-like C2-type domains span residues 210 to 300 (PEIS…VALT) and 309 to 382 (SLVE…IAKN). An intrachain disulfide couples cysteine 231 to cysteine 284. The cysteines at positions 320 and 362 are disulfide-linked. 2 N-linked (GlcNAc...) asparagine glycosylation sites follow: asparagine 375 and asparagine 388. A helical transmembrane segment spans residues 430-453 (FGVSIAVGLAAFACVLLVVLFIMI). Residues 454 to 825 (NKYGRRSKFG…ATPIYLDILG (372 aa)) lie on the Cytoplasmic side of the membrane. Serine 493 carries the phosphoserine modification. The residue at position 516 (tyrosine 516) is a Phosphotyrosine. The Protein kinase domain occupies 538-825 (IVLKRELGEG…ATPIYLDILG (288 aa)). Residues 544–552 (LGEGAFGKV) and lysine 572 contribute to the ATP site. The active-site Proton acceptor is aspartate 679. Tyrosine 705, tyrosine 709, and tyrosine 710 each carry phosphotyrosine; by autocatalysis.

The protein belongs to the protein kinase superfamily. Tyr protein kinase family. Insulin receptor subfamily. As to quaternary structure, exists in a dynamic equilibrium between monomeric (low affinity) and dimeric (high affinity) structures. Binds SH2B2. Interacts with SQSTM1 and KIDINS220. Interacts with PTPRS. Interacts with MAPK8IP3/JIP3. Post-translationally, ligand-mediated auto-phosphorylation. In terms of tissue distribution, isoform 2 expression is restricted to specific areas in adult brain. Isoform 3 transcripts are readily detected early during embryogenesis and are expressed predominantly in adult brain and gonads.

Its subcellular location is the membrane. It catalyses the reaction L-tyrosyl-[protein] + ATP = O-phospho-L-tyrosyl-[protein] + ADP + H(+). Receptor tyrosine kinase involved in nervous system and probably heart development. Upon binding of its ligand NTF3/neurotrophin-3, NTRK3 autophosphorylates and activates different signaling pathways, including the phosphatidylinositol 3-kinase/AKT and the MAPK pathways, that control cell survival and differentiation. The chain is NT-3 growth factor receptor (Ntrk3) from Mus musculus (Mouse).